A 407-amino-acid chain; its full sequence is Imidazolonepropionase (407 aa).

Positions 74 and 76 each coordinate Fe(3+). The Zn(2+) site is built by His-74 and His-76. The 4-imidazolone-5-propanoate site is built by Arg-83, Tyr-146, and His-179. Tyr-146 serves as a coordination point for N-formimidoyl-L-glutamate. A Fe(3+)-binding site is contributed by His-244. His-244 contacts Zn(2+). Gln-247 serves as a coordination point for 4-imidazolone-5-propanoate. Asp-319 is a Fe(3+) binding site. Residue Asp-319 coordinates Zn(2+). Asn-321 and Gly-323 together coordinate N-formimidoyl-L-glutamate. Residue Thr-324 coordinates 4-imidazolone-5-propanoate.

The protein belongs to the metallo-dependent hydrolases superfamily. HutI family. Requires Zn(2+) as cofactor. Fe(3+) is required as a cofactor.

It localises to the cytoplasm. The enzyme catalyses 4-imidazolone-5-propanoate + H2O = N-formimidoyl-L-glutamate. Its pathway is amino-acid degradation; L-histidine degradation into L-glutamate; N-formimidoyl-L-glutamate from L-histidine: step 3/3. Its function is as follows. Catalyzes the hydrolytic cleavage of the carbon-nitrogen bond in imidazolone-5-propanoate to yield N-formimidoyl-L-glutamate. It is the third step in the universal histidine degradation pathway. The polypeptide is Imidazolonepropionase (Salmonella typhi).